Consider the following 426-residue polypeptide: Glutamate-1-semialdehyde 2,1-aminomutase (426 aa).

The residue at position 265 (Lys-265) is an N6-(pyridoxal phosphate)lysine.

Belongs to the class-III pyridoxal-phosphate-dependent aminotransferase family. HemL subfamily. As to quaternary structure, homodimer. Requires pyridoxal 5'-phosphate as cofactor.

It is found in the cytoplasm. It carries out the reaction (S)-4-amino-5-oxopentanoate = 5-aminolevulinate. It functions in the pathway porphyrin-containing compound metabolism; protoporphyrin-IX biosynthesis; 5-aminolevulinate from L-glutamyl-tRNA(Glu): step 2/2. The protein is Glutamate-1-semialdehyde 2,1-aminomutase of Klebsiella pneumoniae (strain 342).